Reading from the N-terminus, the 354-residue chain is Serum paraoxonase/arylesterase 2 (354 aa).

A disulfide bridge connects residues Cys42 and Cys352. Residues Glu53 and Asp54 each contribute to the Ca(2+) site. Catalysis depends on His114, which acts as the Proton acceptor. Residues Ile116, Asn167, Asp168, and Asn223 each coordinate Ca(2+). Asn254 carries N-linked (GlcNAc...) asparagine glycosylation. 2 residues coordinate Ca(2+): Asp268 and Asn269. N-linked (GlcNAc...) asparagine glycans are attached at residues Asn269 and Asn323.

It belongs to the paraoxonase family. In terms of assembly, homotrimer. The cofactor is Ca(2+). Post-translationally, the signal sequence is not cleaved. In terms of tissue distribution, widely expressed with highest expression in liver, lung, placenta, testis and heart.

The protein localises to the membrane. The catalysed reaction is a phenyl acetate + H2O = a phenol + acetate + H(+). The enzyme catalyses an N-acyl-L-homoserine lactone + H2O = an N-acyl-L-homoserine + H(+). Capable of hydrolyzing lactones and a number of aromatic carboxylic acid esters. Has antioxidant activity. Is not associated with high density lipoprotein. Prevents LDL lipid peroxidation, reverses the oxidation of mildly oxidized LDL, and inhibits the ability of MM-LDL to induce monocyte chemotaxis. This Homo sapiens (Human) protein is Serum paraoxonase/arylesterase 2 (PON2).